A 181-amino-acid chain; its full sequence is uncharacterized protein (181 aa).

This is an uncharacterized protein from Acheta domesticus (House cricket).